We begin with the raw amino-acid sequence, 541 residues long: Chaperonin GroEL 2 (541 aa).

Residues 29 to 32 (TLGP), 86 to 90 (DGTTT), Gly-413, 476 to 478 (NAA), and Asp-492 each bind ATP.

It belongs to the chaperonin (HSP60) family. As to quaternary structure, forms a cylinder of 14 subunits composed of two heptameric rings stacked back-to-back. Interacts with the co-chaperonin GroES.

The protein localises to the secreted. The protein resides in the capsule. It localises to the cell surface. It is found in the cell wall. It carries out the reaction ATP + H2O + a folded polypeptide = ADP + phosphate + an unfolded polypeptide.. In terms of biological role, together with its co-chaperonin GroES, plays an essential role in assisting protein folding. The GroEL-GroES system forms a nano-cage that allows encapsulation of the non-native substrate proteins and provides a physical environment optimized to promote and accelerate protein folding. The chain is Chaperonin GroEL 2 from Mycolicibacterium gilvum (strain PYR-GCK) (Mycobacterium gilvum (strain PYR-GCK)).